The following is a 247-amino-acid chain: Protein Thf1 (247 aa).

The stretch at 198-224 (IAQVRQAMDDILEAQKKRREADQAKKE) forms a coiled coil. Residues 209–247 (LEAQKKRREADQAKKEGSDDTPTTEASTPDSEPTSEVSS) are disordered. Residues 210-226 (EAQKKRREADQAKKEGS) are compositionally biased toward basic and acidic residues. Polar residues predominate over residues 228 to 247 (DTPTTEASTPDSEPTSEVSS).

It belongs to the THF1 family.

Its function is as follows. May be involved in photosynthetic membrane biogenesis. This chain is Protein Thf1, found in Acaryochloris marina (strain MBIC 11017).